We begin with the raw amino-acid sequence, 829 residues long: Periplasmic nitrate reductase (829 aa).

Residues 1-27 (MNRRDFMKANAVIAAASAAGLALPAGA) constitute a signal peptide (tat-type signal). Residues 39–95 (LEWNKAPCRFCGTGCSVMVATREGKVVATHGDANSEVNRGLSCIKGYFLSKIMYGRD) enclose the 4Fe-4S Mo/W bis-MGD-type domain. Residues Cys46, Cys49, Cys53, and Cys81 each contribute to the [4Fe-4S] cluster site. Mo-bis(molybdopterin guanine dinucleotide) is bound by residues Lys83, Gln150, Asn175, Cys179, 212-219 (WGSNMAEM), 243-247 (STFEH), 262-264 (QTD), Met373, Gln377, Asn483, 509-510 (SD), Lys532, Asp559, and 719-728 (TGRVLEHWHS). Trp795 serves as a coordination point for substrate. Mo-bis(molybdopterin guanine dinucleotide) is bound by residues Asn803 and Lys820.

It belongs to the prokaryotic molybdopterin-containing oxidoreductase family. NasA/NapA/NarB subfamily. As to quaternary structure, component of the periplasmic nitrate reductase NapAB complex composed of NapA and NapB. Requires [4Fe-4S] cluster as cofactor. The cofactor is Mo-bis(molybdopterin guanine dinucleotide). Predicted to be exported by the Tat system. The position of the signal peptide cleavage has not been experimentally proven.

It localises to the periplasm. The catalysed reaction is 2 Fe(II)-[cytochrome] + nitrate + 2 H(+) = 2 Fe(III)-[cytochrome] + nitrite + H2O. In terms of biological role, catalytic subunit of the periplasmic nitrate reductase complex NapAB. Receives electrons from NapB and catalyzes the reduction of nitrate to nitrite. This Shewanella denitrificans (strain OS217 / ATCC BAA-1090 / DSM 15013) protein is Periplasmic nitrate reductase.